The following is a 178-amino-acid chain: uncharacterized protein (178 aa).

The N-acetyltransferase domain maps to 9–173 (LTLRKMELED…IDVYMFSLLK (165 aa)).

This is an uncharacterized protein from Bacillus licheniformis.